The sequence spans 241 residues: Small ribosomal subunit protein uS2 (241 aa).

This sequence belongs to the universal ribosomal protein uS2 family.

This Shigella flexneri serotype 5b (strain 8401) protein is Small ribosomal subunit protein uS2.